Consider the following 194-residue polypeptide: Holliday junction branch migration complex subunit RuvA (194 aa).

Residues 1–64 (MIGRLRGILA…EDSVSLYGFL (64 aa)) form a domain I region. A domain II region spans residues 65-140 (REGERRLFRD…RAADFSSGAP (76 aa)). The tract at residues 140–144 (PITGQ) is flexible linker. Residues 145 to 194 (LGPDAVSEATVALQQLGYKPAEAARMARDAGAEGDEVATVIRKALQAALR) are domain III.

This sequence belongs to the RuvA family. In terms of assembly, homotetramer. Forms an RuvA(8)-RuvB(12)-Holliday junction (HJ) complex. HJ DNA is sandwiched between 2 RuvA tetramers; dsDNA enters through RuvA and exits via RuvB. An RuvB hexamer assembles on each DNA strand where it exits the tetramer. Each RuvB hexamer is contacted by two RuvA subunits (via domain III) on 2 adjacent RuvB subunits; this complex drives branch migration. In the full resolvosome a probable DNA-RuvA(4)-RuvB(12)-RuvC(2) complex forms which resolves the HJ.

The protein localises to the cytoplasm. In terms of biological role, the RuvA-RuvB-RuvC complex processes Holliday junction (HJ) DNA during genetic recombination and DNA repair, while the RuvA-RuvB complex plays an important role in the rescue of blocked DNA replication forks via replication fork reversal (RFR). RuvA specifically binds to HJ cruciform DNA, conferring on it an open structure. The RuvB hexamer acts as an ATP-dependent pump, pulling dsDNA into and through the RuvAB complex. HJ branch migration allows RuvC to scan DNA until it finds its consensus sequence, where it cleaves and resolves the cruciform DNA. The polypeptide is Holliday junction branch migration complex subunit RuvA (Xanthomonas axonopodis pv. citri (strain 306)).